Consider the following 494-residue polypeptide: Inosine-5'-monophosphate dehydrogenase (494 aa).

CBS domains lie at 93-154 (IIRN…NEKI) and 158-217 (MTTD…CKDM). NAD(+) contacts are provided by residues Asp251 and 301-303 (GIG). Residues Gly303 and Gly305 each coordinate K(+). Residue Ser306 coordinates IMP. Cys308 contacts K(+). Cys308 (thioimidate intermediate) is an active-site residue. IMP is bound by residues 341–343 (DGG), 364–365 (GS), and 388–392 (YRGMG). The Proton acceptor role is filled by Arg406. Glu421 provides a ligand contact to IMP. K(+) contacts are provided by Glu475, Ser476, and His477.

Belongs to the IMPDH/GMPR family. As to quaternary structure, homotetramer. K(+) serves as cofactor.

The enzyme catalyses IMP + NAD(+) + H2O = XMP + NADH + H(+). It participates in purine metabolism; XMP biosynthesis via de novo pathway; XMP from IMP: step 1/1. With respect to regulation, mycophenolic acid (MPA) is a non-competitive inhibitor that prevents formation of the closed enzyme conformation by binding to the same site as the amobile flap. In contrast, mizoribine monophosphate (MZP) is a competitive inhibitor that induces the closed conformation. MPA is a potent inhibitor of mammalian IMPDHs but a poor inhibitor of the bacterial enzymes. MZP is a more potent inhibitor of bacterial IMPDH. Functionally, catalyzes the conversion of inosine 5'-phosphate (IMP) to xanthosine 5'-phosphate (XMP), the first committed and rate-limiting step in the de novo synthesis of guanine nucleotides, and therefore plays an important role in the regulation of cell growth. The protein is Inosine-5'-monophosphate dehydrogenase of Chlorobaculum parvum (strain DSM 263 / NCIMB 8327) (Chlorobium vibrioforme subsp. thiosulfatophilum).